The sequence spans 274 residues: Serine/threonine-protein kinase 1 (274 aa).

Residues 16–273 (AVLAPKVVNG…HSFLASRHDY (258 aa)) enclose the Protein kinase domain. ATP is bound by residues 22 to 30 (VVNGRFGKM) and Lys46. The Proton acceptor role is filled by Asp134.

It belongs to the protein kinase superfamily. Ser/Thr protein kinase family.

It catalyses the reaction L-seryl-[protein] + ATP = O-phospho-L-seryl-[protein] + ADP + H(+). It carries out the reaction L-threonyl-[protein] + ATP = O-phospho-L-threonyl-[protein] + ADP + H(+). This chain is Serine/threonine-protein kinase 1 (PK1), found in Orgyia pseudotsugata multicapsid polyhedrosis virus (OpMNPV).